Here is an 867-residue protein sequence, read N- to C-terminus: uncharacterized protein (867 aa).

The segment at residues 76-108 (CDFCRQKKIRCDMDQSPRPGNACINCRKHHLDC) is a DNA-binding region (zn(2)-C6 fungal-type). Disordered stretches follow at residues 110–167 (FTRT…ITPV) and 217–257 (PQLA…NSNL). Polar residues-rich tracts occupy residues 137–167 (SAKS…ITPV) and 248–257 (SISSYTNSNL).

The protein localises to the nucleus. This is an uncharacterized protein from Schizosaccharomyces pombe (strain 972 / ATCC 24843) (Fission yeast).